A 931-amino-acid chain; its full sequence is Protein translocase subunit SecA (931 aa).

Residues Gln-87, 105–109, and Asp-515 each bind ATP; that span reads GEGKT. Positions 915, 917, 926, and 927 each coordinate Zn(2+).

It belongs to the SecA family. Monomer and homodimer. Part of the essential Sec protein translocation apparatus which comprises SecA, SecYEG and auxiliary proteins SecDF-YajC and YidC. It depends on Zn(2+) as a cofactor.

It is found in the cell inner membrane. It localises to the cytoplasm. The enzyme catalyses ATP + H2O + cellular proteinSide 1 = ADP + phosphate + cellular proteinSide 2.. In terms of biological role, part of the Sec protein translocase complex. Interacts with the SecYEG preprotein conducting channel. Has a central role in coupling the hydrolysis of ATP to the transfer of proteins into and across the cell membrane, serving both as a receptor for the preprotein-SecB complex and as an ATP-driven molecular motor driving the stepwise translocation of polypeptide chains across the membrane. This is Protein translocase subunit SecA from Burkholderia ambifaria (strain ATCC BAA-244 / DSM 16087 / CCUG 44356 / LMG 19182 / AMMD) (Burkholderia cepacia (strain AMMD)).